Reading from the N-terminus, the 160-residue chain is S-ribosylhomocysteine lyase (160 aa).

The Fe cation site is built by histidine 57, histidine 61, and cysteine 127.

This sequence belongs to the LuxS family. Homodimer. Requires Fe cation as cofactor.

The catalysed reaction is S-(5-deoxy-D-ribos-5-yl)-L-homocysteine = (S)-4,5-dihydroxypentane-2,3-dione + L-homocysteine. In terms of biological role, involved in the synthesis of autoinducer 2 (AI-2) which is secreted by bacteria and is used to communicate both the cell density and the metabolic potential of the environment. The regulation of gene expression in response to changes in cell density is called quorum sensing. Catalyzes the transformation of S-ribosylhomocysteine (RHC) to homocysteine (HC) and 4,5-dihydroxy-2,3-pentadione (DPD). In Streptococcus sanguinis (strain SK36), this protein is S-ribosylhomocysteine lyase.